The following is a 338-amino-acid chain: Anthranilate phosphoribosyltransferase (338 aa).

Residues Gly81, 84-85 (GD), Thr89, 91-94 (NIST), 109-117 (KHGNRAVSS), and Ser121 each bind 5-phospho-alpha-D-ribose 1-diphosphate. Residue Gly81 coordinates anthranilate. Mg(2+) is bound at residue Ser93. Residue Asn112 coordinates anthranilate. Arg167 contributes to the anthranilate binding site. Mg(2+) contacts are provided by Asp226 and Glu227.

Belongs to the anthranilate phosphoribosyltransferase family. In terms of assembly, homodimer. The cofactor is Mg(2+).

It catalyses the reaction N-(5-phospho-beta-D-ribosyl)anthranilate + diphosphate = 5-phospho-alpha-D-ribose 1-diphosphate + anthranilate. The protein operates within amino-acid biosynthesis; L-tryptophan biosynthesis; L-tryptophan from chorismate: step 2/5. Its function is as follows. Catalyzes the transfer of the phosphoribosyl group of 5-phosphorylribose-1-pyrophosphate (PRPP) to anthranilate to yield N-(5'-phosphoribosyl)-anthranilate (PRA). The sequence is that of Anthranilate phosphoribosyltransferase from Myxococcus xanthus (strain DK1622).